Here is a 473-residue protein sequence, read N- to C-terminus: Argininosuccinate lyase (473 aa).

The protein belongs to the lyase 1 family. Argininosuccinate lyase subfamily.

It is found in the cytoplasm. The enzyme catalyses 2-(N(omega)-L-arginino)succinate = fumarate + L-arginine. Its pathway is amino-acid biosynthesis; L-arginine biosynthesis; L-arginine from L-ornithine and carbamoyl phosphate: step 3/3. This is Argininosuccinate lyase from Bordetella pertussis (strain Tohama I / ATCC BAA-589 / NCTC 13251).